Here is a 180-residue protein sequence, read N- to C-terminus: ATP-dependent protease subunit HslV (180 aa).

The active site involves Thr6. Na(+) contacts are provided by Ala164, Cys167, and Thr170.

The protein belongs to the peptidase T1B family. HslV subfamily. As to quaternary structure, a double ring-shaped homohexamer of HslV is capped on each side by a ring-shaped HslU homohexamer. The assembly of the HslU/HslV complex is dependent on binding of ATP.

The protein resides in the cytoplasm. It carries out the reaction ATP-dependent cleavage of peptide bonds with broad specificity.. Its activity is regulated as follows. Allosterically activated by HslU binding. Its function is as follows. Protease subunit of a proteasome-like degradation complex believed to be a general protein degrading machinery. In Borrelia duttonii (strain Ly), this protein is ATP-dependent protease subunit HslV.